A 409-amino-acid polypeptide reads, in one-letter code: N-carbamoyl-L-amino acid amidohydrolase (409 aa).

4 residues coordinate a divalent metal cation: His-79, Asp-90, Glu-125, and His-189. Residues Gln-192, His-225, Asn-273, Arg-286, and Ala-355 each contribute to the an N-carbamoyl-L-alpha-amino acid site. Residues Gly-208–Pro-325 form an involved in dimerization region. His-380 provides a ligand contact to a divalent metal cation.

The protein belongs to the peptidase M20 family. In terms of assembly, homodimer. Mn(2+) is required as a cofactor. The cofactor is Ni(2+). It depends on Co(2+) as a cofactor. Requires Fe(2+) as cofactor.

The catalysed reaction is an N-carbamoyl-L-alpha-amino acid + H2O + 2 H(+) = an L-alpha-amino acid + NH4(+) + CO2. It catalyses the reaction N-carbamoyl-L-methionine + H2O + 2 H(+) = L-methionine + NH4(+) + CO2. The enzyme catalyses N-acetyl-L-methionine + H2O = L-methionine + acetate. It carries out the reaction N-carbamoyl-L-alanine + H2O + 2 H(+) = L-alanine + NH4(+) + CO2. The catalysed reaction is N-carbamoyl-L-glutamate + H2O + 2 H(+) = L-glutamate + NH4(+) + CO2. It catalyses the reaction N-carbamoylglycine + H2O + 2 H(+) = glycine + NH4(+) + CO2. The enzyme catalyses N-carbamoyl-L-leucine + H2O + 2 H(+) = L-leucine + NH4(+) + CO2. Functionally, catalyzes the hydrolysis of aliphatic N-carbamoyl-L-alpha-amino acids to free L-alpha-amino acids. Is strictly L-specific since it is inactive toward N-carbamoyl-D-alpha-amino acids. Is not able to use aromatic N-carbamoyl-L-alpha-amino acids like N-carbamoyl-L-tryptophan and N-carbamoyl-L-phenylalanine as substrates, but is also able to hydrolyze N-acetyl-L-methionine. The protein is N-carbamoyl-L-amino acid amidohydrolase of Geobacillus stearothermophilus (Bacillus stearothermophilus).